The sequence spans 341 residues: UDP-3-O-(3-hydroxymyristoyl)glucosamine N-acyltransferase (341 aa).

His-239 (proton acceptor) is an active-site residue.

Belongs to the transferase hexapeptide repeat family. LpxD subfamily. As to quaternary structure, homotrimer.

It catalyses the reaction a UDP-3-O-[(3R)-3-hydroxyacyl]-alpha-D-glucosamine + a (3R)-hydroxyacyl-[ACP] = a UDP-2-N,3-O-bis[(3R)-3-hydroxyacyl]-alpha-D-glucosamine + holo-[ACP] + H(+). It carries out the reaction UDP-3-O-[(3R)-3-hydroxytetradecanoyl]-alpha-D-glucosamine + (3R)-hydroxytetradecanoyl-[ACP] = UDP-2-N,3-O-bis[(3R)-3-hydroxytetradecanoyl]-alpha-D-glucosamine + holo-[ACP] + H(+). Its pathway is glycolipid biosynthesis; lipid IV(A) biosynthesis; lipid IV(A) from (3R)-3-hydroxytetradecanoyl-[acyl-carrier-protein] and UDP-N-acetyl-alpha-D-glucosamine: step 3/6. Its function is as follows. Catalyzes the N-acylation of UDP-3-O-(hydroxytetradecanoyl)glucosamine using 3-hydroxytetradecanoyl-ACP as the acyl donor. Is involved in the biosynthesis of lipid A, a phosphorylated glycolipid that anchors the lipopolysaccharide to the outer membrane of the cell. This chain is UDP-3-O-(3-hydroxymyristoyl)glucosamine N-acyltransferase, found in Shigella dysenteriae serotype 1 (strain Sd197).